A 373-amino-acid polypeptide reads, in one-letter code: Arabinonate dehydratase (373 aa).

Mg(2+) is bound by residues D199, E225, and E251.

Belongs to the mandelate racemase/muconate lactonizing enzyme family. In terms of assembly, homooctamer. It depends on Mg(2+) as a cofactor.

The catalysed reaction is D-arabinonate = 2-dehydro-3-deoxy-D-arabinonate + H2O. With respect to regulation, inhibited by substrate levels above 8 mM. Its function is as follows. Catalyzes the dehydration of D-arabinonate to 2-keto-3-deoxy-D-arabinonate. Participates in a pentose oxidation pathway that converts D-arabinonate to 2-oxoglutarate. The chain is Arabinonate dehydratase from Saccharolobus solfataricus (strain ATCC 35092 / DSM 1617 / JCM 11322 / P2) (Sulfolobus solfataricus).